The primary structure comprises 433 residues: 3-phosphoshikimate 1-carboxyvinyltransferase (433 aa).

Lysine 23, serine 24, and arginine 28 together coordinate 3-phosphoshikimate. Lysine 23 serves as a coordination point for phosphoenolpyruvate. Residues glycine 95 and arginine 123 each coordinate phosphoenolpyruvate. 6 residues coordinate 3-phosphoshikimate: serine 170, serine 171, glutamine 172, serine 198, aspartate 317, and lysine 344. Residue glutamine 172 participates in phosphoenolpyruvate binding. The active-site Proton acceptor is aspartate 317. Residues arginine 348, arginine 391, and lysine 416 each coordinate phosphoenolpyruvate.

The protein belongs to the EPSP synthase family. Monomer.

The protein localises to the cytoplasm. It carries out the reaction 3-phosphoshikimate + phosphoenolpyruvate = 5-O-(1-carboxyvinyl)-3-phosphoshikimate + phosphate. It functions in the pathway metabolic intermediate biosynthesis; chorismate biosynthesis; chorismate from D-erythrose 4-phosphate and phosphoenolpyruvate: step 6/7. In terms of biological role, catalyzes the transfer of the enolpyruvyl moiety of phosphoenolpyruvate (PEP) to the 5-hydroxyl of shikimate-3-phosphate (S3P) to produce enolpyruvyl shikimate-3-phosphate and inorganic phosphate. This chain is 3-phosphoshikimate 1-carboxyvinyltransferase, found in Neisseria meningitidis serogroup B (strain ATCC BAA-335 / MC58).